The primary structure comprises 2324 residues: Acetyl-CoA carboxylase (2324 aa).

M1 is modified (N-acetylmethionine). The tract at residues 1–34 (MEESSQPAKPLEMNPHSRFIIGSVSEDNSEDETS) is disordered. Residues S78 and S80 each carry the phosphoserine modification. A Biotin carboxylation domain is found at 117–618 (VIEKVLIANN…DTGWLDRLIA (502 aa)). The ATP-grasp domain maps to 275 to 466 (QKRILNVPQE…LPAAQLQIAM (192 aa)). 315-320 (GGGGKG) contributes to the ATP binding site. Residues E424, E437, and N439 each coordinate Mn(2+). R441 is a catalytic residue. One can recognise a Biotinyl-binding domain in the interval 745–819 (FEKENDPSIL…DPGCVIAKLQ (75 aa)). N6-biotinyllysine is present on K786. At S1193 the chain carries Phosphoserine. Residues 1553–1891 (PYVTKDLLQS…SVYSPVPILK (339 aa)) enclose the CoA carboxyltransferase N-terminal domain. A carboxyltransferase region spans residues 1553–2211 (PYVTKDLLQS…EDVVKKKIHD (659 aa)). Residues R1800, K2104, and R2106 each coordinate CoA. Positions 1895 to 2211 (PIDRTIDFVP…EDVVKKKIHD (317 aa)) constitute a CoA carboxyltransferase C-terminal domain.

Requires biotin as cofactor. It depends on Mn(2+) as a cofactor.

It localises to the cytoplasm. The enzyme catalyses hydrogencarbonate + acetyl-CoA + ATP = malonyl-CoA + ADP + phosphate + H(+). It carries out the reaction N(6)-biotinyl-L-lysyl-[protein] + hydrogencarbonate + ATP = N(6)-carboxybiotinyl-L-lysyl-[protein] + ADP + phosphate + H(+). It participates in lipid metabolism; malonyl-CoA biosynthesis; malonyl-CoA from acetyl-CoA: step 1/1. With respect to regulation, by phosphorylation. In terms of biological role, catalyzes the rate-limiting reaction in the biogenesis of long-chain fatty acids. Carries out three functions: biotin carboxyl carrier protein, biotin carboxylase and carboxyltransferase. In Gallus gallus (Chicken), this protein is Acetyl-CoA carboxylase (ACAC).